A 158-amino-acid polypeptide reads, in one-letter code: Regulator of sigma D (158 aa).

Belongs to the Rsd/AlgQ family. In terms of assembly, interacts with RpoD.

The protein resides in the cytoplasm. Functionally, binds RpoD and negatively regulates RpoD-mediated transcription activation by preventing the interaction between the primary sigma factor RpoD with the catalytic core of the RNA polymerase and with promoter DNA. May be involved in replacement of the RNA polymerase sigma subunit from RpoD to RpoS during the transition from exponential growth to the stationary phase. This chain is Regulator of sigma D, found in Escherichia fergusonii (strain ATCC 35469 / DSM 13698 / CCUG 18766 / IAM 14443 / JCM 21226 / LMG 7866 / NBRC 102419 / NCTC 12128 / CDC 0568-73).